The primary structure comprises 31 residues: AFCNLRRCELSCRSLGLLGKCIGEECKCVPY.

Intrachain disulfides connect Cys3–Cys21, Cys8–Cys26, and Cys12–Cys28. Residues Arg6 to Glu9 form a [R/K]XCQ motif region. Tyr31 is modified (tyrosine amide).

This sequence belongs to the short scorpion toxin superfamily. Potassium channel inhibitor family. Alpha-KTx 05 subfamily. Expressed by the venom gland.

It localises to the secreted. Functionally, blocks small conductance calcium-activated potassium channels. Shows activity on KCa2.2/KCNN2 (IC(50)=0.0243 nM), KCa2.3/KCNN3 (IC(50)=1.7 nM), and KCa2.1/KCNN1 (IC(50)=42 nM). Induces cell death when tested on human T lymphoblastic leukemia Jurkat E6.1 and human breast cancer MDA-MB-231 cell lines which constituvely express KCa2.2/KCNN2, but not on human peripheral blood lymphocytes (which do not express KCa2.2/KCNN2). The sequence is that of Potassium channel toxin alpha-KTx 5.4 from Hottentotta tamulus (Eastern Indian scorpion).